The primary structure comprises 137 residues: uncharacterized protein (137 aa).

The chain crosses the membrane as a helical span at residues Thr20–Ala42.

Its subcellular location is the host membrane. This is an uncharacterized protein from Dryophytes versicolor (chameleon treefrog).